Consider the following 87-residue polypeptide: Hemocyanin alpha chain (87 aa).

Belongs to the tyrosinase family. Hemocyanin subfamily. As to quaternary structure, polymer that contains six different types of chains (alpha, beta, gamma, delta, epsilon, and zeta). In terms of tissue distribution, hemolymph.

It is found in the secreted. Its subcellular location is the extracellular space. In terms of biological role, hemocyanins are copper-containing oxygen carriers occurring freely dissolved in the hemolymph of many mollusks and arthropods. In Tachypleus tridentatus (Japanese horseshoe crab), this protein is Hemocyanin alpha chain.